We begin with the raw amino-acid sequence, 210 residues long: Redox-sensing transcriptional repressor Rex (210 aa).

A DNA-binding region (H-T-H motif) is located at residues 17–56 (KYHRYLGNLMRNDVDRISSKELSEKIGFTASQIRQDLNCF). 91–96 (GAGNIG) lines the NAD(+) pocket.

The protein belongs to the transcriptional regulatory Rex family. In terms of assembly, homodimer.

It is found in the cytoplasm. In terms of biological role, modulates transcription in response to changes in cellular NADH/NAD(+) redox state. This is Redox-sensing transcriptional repressor Rex from Clostridium kluyveri (strain ATCC 8527 / DSM 555 / NBRC 12016 / NCIMB 10680 / K1).